The following is a 409-amino-acid chain: Dual-specificity RNA methyltransferase RlmN (409 aa).

Catalysis depends on glutamate 126, which acts as the Proton acceptor. Residues 132 to 373 enclose the Radical SAM core domain; it reads EEGRGTLCLS…NQAGYASPIR (242 aa). A disulfide bridge connects residues cysteine 139 and cysteine 384. The [4Fe-4S] cluster site is built by cysteine 146, cysteine 150, and cysteine 153. S-adenosyl-L-methionine-binding positions include 210–211, serine 242, 264–266, and asparagine 341; these read GE and SLH. The active-site S-methylcysteine intermediate is cysteine 384.

Belongs to the radical SAM superfamily. RlmN family. Requires [4Fe-4S] cluster as cofactor.

Its subcellular location is the cytoplasm. The catalysed reaction is adenosine(2503) in 23S rRNA + 2 reduced [2Fe-2S]-[ferredoxin] + 2 S-adenosyl-L-methionine = 2-methyladenosine(2503) in 23S rRNA + 5'-deoxyadenosine + L-methionine + 2 oxidized [2Fe-2S]-[ferredoxin] + S-adenosyl-L-homocysteine. The enzyme catalyses adenosine(37) in tRNA + 2 reduced [2Fe-2S]-[ferredoxin] + 2 S-adenosyl-L-methionine = 2-methyladenosine(37) in tRNA + 5'-deoxyadenosine + L-methionine + 2 oxidized [2Fe-2S]-[ferredoxin] + S-adenosyl-L-homocysteine. Specifically methylates position 2 of adenine 2503 in 23S rRNA and position 2 of adenine 37 in tRNAs. m2A2503 modification seems to play a crucial role in the proofreading step occurring at the peptidyl transferase center and thus would serve to optimize ribosomal fidelity. This Bartonella quintana (strain Toulouse) (Rochalimaea quintana) protein is Dual-specificity RNA methyltransferase RlmN.